The sequence spans 85 residues: Large ribosomal subunit protein bL27 (85 aa).

The interval 1-20 is disordered; that stretch reads MAHKKAGGSTRNGRDSEAKR.

The protein belongs to the bacterial ribosomal protein bL27 family.

The sequence is that of Large ribosomal subunit protein bL27 from Serratia proteamaculans (strain 568).